Reading from the N-terminus, the 311-residue chain is AT-hook motif nuclear-localized protein 27 (311 aa).

A disordered region spans residues 40–105 (HHHQHQQHQQ…KNKAKPPIIV (66 aa)). A compositionally biased stretch (basic and acidic residues) spans 55–75 (DDSRESDHSNKDHHQQGRPDS). Positions 86-98 (KRPRGRPPGSKNK) form a DNA-binding region, a.T hook. Positions 110–258 (PNALRSHVLE…EEGGGGGGGG (149 aa)) constitute a PPC domain. Positions 178–183 (GRFEIL) are required for the binding to non-AHL interactors. The disordered stretch occupies residues 246-311 (EEEEEGGGGG…GAGTPSRPPF (66 aa)). Over residues 252–262 (GGGGGGGGGGP) the composition is skewed to gly residues. Positions 263–277 (PQMQQAPSASPPSGV) are enriched in low complexity. Over residues 278-292 (TGQGQLGGNVGGYGF) the composition is skewed to gly residues.

As to quaternary structure, homodimer. Interacts with AHL12, AHL25, AHL29, TCP4, TCP13, EF114, ATAF2/NAC081, histone H2B.1, histone H3.3 and histone H4. Expressed in the hypocotyl and the vascular tissue of seedling.

It is found in the nucleus. Transcription factor that specifically binds AT-rich DNA sequences related to the nuclear matrix attachment regions (MARs). Negatively regulates plant innate immunity (PTI) to pathogens through the down-regulation of the PAMP-triggered FRK1 expression. Acts redundantly with AHL18, AHL22 and AHL29 in the regulation of flowering and regulation of the hypocotyl elongation. Acts as a chromatin remodeling factor that negatively regulates the leaf senescence. Acts redundantly with AHL29/SOB3 to modulate hypocotyl growth inhibition in response to light. The chain is AT-hook motif nuclear-localized protein 27 from Arabidopsis thaliana (Mouse-ear cress).